Consider the following 1040-residue polypeptide: Protocadherin-10 (1040 aa).

Residues methionine 1 to serine 18 form the signal peptide. Cadherin domains are found at residues glutamine 19–phenylalanine 122, proline 123–phenylalanine 250, aspartate 251–isoleucine 358, serine 359–phenylalanine 463, serine 464–isoleucine 574, and asparagine 582–glycine 690. At glutamine 19–threonine 715 the chain is on the extracellular side. Gly residues predominate over residues glycine 207–glycine 223. The tract at residues glycine 207–glutamine 228 is disordered. An N-linked (GlcNAc...) asparagine glycan is attached at asparagine 273. Residue asparagine 557 is glycosylated (N-linked (GlcNAc...) asparagine). Positions glutamine 686 to glycine 697 are enriched in gly residues. Residues glutamine 686–glycine 708 are disordered. A helical transmembrane segment spans residues leucine 716–leucine 736. At alanine 737–cysteine 1040 the chain is on the cytoplasmic side. Residues alanine 899–asparagine 927 are disordered. A compositionally biased stretch (basic and acidic residues) spans aspartate 910 to threonine 926.

In terms of tissue distribution, moderately expressed in all regions of the brain examined, as well as in testis and ovary, and low expression in all other tissues tested.

Its subcellular location is the cell membrane. In terms of biological role, potential calcium-dependent cell-adhesion protein. Functionally, (Microbial infection) Acts as a receptor for Western equine encephalitis virus. In Homo sapiens (Human), this protein is Protocadherin-10 (PCDH10).